A 302-amino-acid polypeptide reads, in one-letter code: Sulfotransferase 1C4 (302 aa).

55 to 60 (KAGTTW) contributes to the 3'-phosphoadenylyl sulfate binding site. 113–115 (KTH) lines the substrate pocket. The Proton acceptor role is filled by His115. 3'-phosphoadenylyl sulfate is bound by residues Arg137, Ser145, Tyr200, 234 to 239 (TSFDVM), and 262 to 266 (FMRKG).

It belongs to the sulfotransferase 1 family. In terms of tissue distribution, expressed in liver, kidney and jejunum.

Its subcellular location is the cytoplasm. The protein resides in the cytosol. The catalysed reaction is a phenol + 3'-phosphoadenylyl sulfate = an aryl sulfate + adenosine 3',5'-bisphosphate + H(+). It catalyses the reaction 17beta-estradiol + 3'-phosphoadenylyl sulfate = 17beta-estradiol 3-sulfate + adenosine 3',5'-bisphosphate + H(+). The enzyme catalyses bisphenol A + 3'-phosphoadenylyl sulfate = bisphenyl A sulfate + adenosine 3',5'-bisphosphate + H(+). Functionally, sulfotransferase that utilizes 3'-phospho-5'-adenylyl sulfate (PAPS) as sulfonate donor to catalyze the sulfate conjugation of phenolic compounds and estrogen (E2). Can also sulfonate estrogenic compounds, however, the dietary flavonoids (phytoestrogen) and environmental estrogens, like bisphenol A are better substrates than 17beta-estradiol (E2). The chain is Sulfotransferase 1C4 (SULT1C4) from Macaca fascicularis (Crab-eating macaque).